The following is a 168-amino-acid chain: Urease accessory protein UreE (168 aa).

Residues 137–168 (PESGAYHGTTGHGGGHSHSHGHSHDHHHDHSH) form a disordered region. The span at 151 to 161 (GHSHSHGHSHD) shows a compositional bias: basic residues.

The protein belongs to the UreE family.

Its subcellular location is the cytoplasm. In terms of biological role, involved in urease metallocenter assembly. Binds nickel. Probably functions as a nickel donor during metallocenter assembly. This is Urease accessory protein UreE from Saccharophagus degradans (strain 2-40 / ATCC 43961 / DSM 17024).